The following is a 788-amino-acid chain: Protein translocase subunit SecA 2 (788 aa).

ATP contacts are provided by residues Q86, G104–T108, and D493.

It belongs to the SecA family. Monomer and homodimer. Part of the essential Sec protein translocation apparatus which comprises SecA, SecYEG and auxiliary proteins SecDF. Other proteins may also be involved.

The protein resides in the cell membrane. The protein localises to the cytoplasm. It catalyses the reaction ATP + H2O + cellular proteinSide 1 = ADP + phosphate + cellular proteinSide 2.. Its function is as follows. Part of the Sec protein translocase complex. Interacts with the SecYEG preprotein conducting channel. Has a central role in coupling the hydrolysis of ATP to the transfer of proteins into and across the cell membrane, serving as an ATP-driven molecular motor driving the stepwise translocation of polypeptide chains across the membrane. In Bacillus cereus (strain ZK / E33L), this protein is Protein translocase subunit SecA 2.